A 783-amino-acid chain; its full sequence is MRQKTLDVLEFDKIKSFVASETISDLGREKVSKMSPATDFETVEFQMNETDEISQIYNKHRLPSLSGLAKISPLIHRANIGGVLNVTELNLVKRLIQVQNQFKTFYNQLLEEDEQVVKYPILNDKMNQLPILSDLFQEINEKCDTHDLYDSASYELQGIRSKISSTNQRIRQNLDRIVKSQANQKKLSDAIITVRNDRNVIPVKAEYRQDFKGIVHDQSASGQTLYIEPSSIVEMNNQISRLRNDEAVERERILTELTGMVAAEADGCLIAESVMGQIDFLTAKARYARSIKGTKPTFYKDRTVYLPNAYHPLLNKDTVVANTIEFVDDIETVIITGPNTGGKTVTLKTLGLIIIMAQSGLLIPTLDGSQLSVFENVYCDIGDEQSIEQSLSTFSSHMKNIVEILQETDKNSLVLFDELGAGTDPSEGAALAMSILDHVREIGSLVMATTHYPELKAYSYNREGVMNASVEFDVNTLSPTYKLLMGVPGRSNAFDISRKLGLSLGIINKAKTMIGTDEQEINSMIESLEKNSKRVDEQRIELDRLLKEARKTHDDLEHQYEQYKSYEKKLMDEAKEKANQRVKSATKEADSILKELRTLRDQKGADVKEHELIDKKKQLDDQYEAKSLKQNVQKQKYDEIHAGDEVKVLSYGQKGEVLELVSEEEAVVQMGIIKMKLPIEDLEKTKKKKEKPSKMVTRQNRQTIKTELHLRGYRYEEAVSELDQYIDQAVLSNYEQVYIIHGKGTGALQKAVQNHLNKHKSVKSYRGGMPSEGGFGVTVAELK.

337-344 contacts ATP; sequence GPNTGGKT. In terms of domain architecture, Smr spans 708-783; sequence LHLRGYRYEE…GFGVTVAELK (76 aa).

The protein belongs to the DNA mismatch repair MutS family. MutS2 subfamily. In terms of assembly, homodimer. Binds to stalled ribosomes, contacting rRNA.

In terms of biological role, endonuclease that is involved in the suppression of homologous recombination and thus may have a key role in the control of bacterial genetic diversity. Functionally, acts as a ribosome collision sensor, splitting the ribosome into its 2 subunits. Detects stalled/collided 70S ribosomes which it binds and splits by an ATP-hydrolysis driven conformational change. Acts upstream of the ribosome quality control system (RQC), a ribosome-associated complex that mediates the extraction of incompletely synthesized nascent chains from stalled ribosomes and their subsequent degradation. Probably generates substrates for RQC. The sequence is that of Endonuclease MutS2 from Staphylococcus haemolyticus (strain JCSC1435).